The primary structure comprises 311 residues: Protein YIPF2 (311 aa).

A2 is subject to N-acetylalanine. At 2–120 (AAADDLAFHE…LRNRPDLYGP (119 aa)) the chain is on the cytoplasmic side. Residues 121–141 (FWICATLAFVLAVTGNLTLVL) traverse the membrane as a helical segment. At 142 to 159 (AQRRDPSIHYSPQFHKVT) the chain is on the lumenal side. Residues 160–180 (IAGITIYCYAWLVPLALWGFL) form a helical membrane-spanning segment. At 181 to 198 (RWRQGTRERMGLYTFLET) the chain is on the cytoplasmic side. A helical transmembrane segment spans residues 199 to 219 (VCVYGYSLFVFIPTVVLWLIP). Over 220–226 (VQWLQWL) the chain is Lumenal. The helical transmembrane segment at 227–247 (FGALALALSAAGLVFTLWPVV) threads the bilayer. Over 248–252 (REDTR) the chain is Cytoplasmic. A helical transmembrane segment spans residues 253–273 (LVAAALLSIVVLLHALLALGC). Residues 274–311 (KLYFFQPLPLDHVVPAPQAIPPSPNVLLPSSVQPMTTF) are Lumenal-facing.

This sequence belongs to the YIP1 family. As to quaternary structure, interacts with YIPF6; this interaction may stabilize YIPF2. May also form a ternary complex with YIPF1 and YIPF6.

It localises to the golgi apparatus. The protein localises to the cis-Golgi network membrane. Its subcellular location is the trans-Golgi network membrane. It is found in the late endosome membrane. This chain is Protein YIPF2 (Yipf2), found in Rattus norvegicus (Rat).